A 509-amino-acid polypeptide reads, in one-letter code: ESX-2 secretion system protein eccD2 (509 aa).

The next 11 helical transmembrane spans lie at 135-155 (LTAA…VLAL), 170-190 (AMAG…WWGW), 196-216 (LFSG…ACAP), 222-242 (AAHA…IGVA), 248-268 (QTAV…VAAV), 281-301 (ICVL…ALWV), 364-384 (VQVG…WGVL), 389-409 (PWAW…ITQG), 418-438 (AVAL…KYAL), 449-469 (LWPA…ALVV), and 487-507 (VLAM…FAWL).

The protein belongs to the EccD/Snm4 family. In terms of assembly, part of the ESX-2 / type VII secretion system (T7SS), which is composed of cytosolic and membrane components.

Its subcellular location is the cell membrane. This is ESX-2 secretion system protein eccD2 (eccD2) from Mycobacterium tuberculosis (strain CDC 1551 / Oshkosh).